A 331-amino-acid chain; its full sequence is Glutamyl-tRNA reductase (331 aa).

Residues 49-52, Ser-107, 112-114, and Gln-118 each bind substrate; these read TCNR and EDQ. Cys-50 functions as the Nucleophile in the catalytic mechanism. Residue 184–189 participates in NADP(+) binding; sequence GNGEIG.

It belongs to the glutamyl-tRNA reductase family. As to quaternary structure, homodimer.

The catalysed reaction is (S)-4-amino-5-oxopentanoate + tRNA(Glu) + NADP(+) = L-glutamyl-tRNA(Glu) + NADPH + H(+). It participates in porphyrin-containing compound metabolism; protoporphyrin-IX biosynthesis; 5-aminolevulinate from L-glutamyl-tRNA(Glu): step 1/2. In terms of biological role, catalyzes the NADPH-dependent reduction of glutamyl-tRNA(Glu) to glutamate 1-semialdehyde (GSA). This chain is Glutamyl-tRNA reductase, found in Acetivibrio thermocellus (strain ATCC 27405 / DSM 1237 / JCM 9322 / NBRC 103400 / NCIMB 10682 / NRRL B-4536 / VPI 7372) (Clostridium thermocellum).